Consider the following 279-residue polypeptide: Large ribosomal subunit protein uL2 (279 aa).

Residues 224-279 (AMNAVDHPMGGGRGHSKGGNIPRSPWNQPSRGLKTRPKKSWDWMIVSDRRKNKAGK) are disordered.

The protein belongs to the universal ribosomal protein uL2 family. Part of the 50S ribosomal subunit. Forms a bridge to the 30S subunit in the 70S ribosome.

Functionally, one of the primary rRNA binding proteins. Required for association of the 30S and 50S subunits to form the 70S ribosome, for tRNA binding and peptide bond formation. It has been suggested to have peptidyltransferase activity; this is somewhat controversial. Makes several contacts with the 16S rRNA in the 70S ribosome. The chain is Large ribosomal subunit protein uL2 from Elusimicrobium minutum (strain Pei191).